Consider the following 75-residue polypeptide: Lysis protein (75 aa).

The segment covering 1-16 has biased composition (polar residues); that stretch reads METRFPQQSQQTPAST. Positions 1–29 are disordered; sequence METRFPQQSQQTPASTNRRRPFKHEDYPC. A helical membrane pass occupies residues 38–60; it reads LYVLIFLAIFLSKFTNQLLLSLL.

The protein belongs to the Leviviricetes lysis protein family.

It is found in the host cell inner membrane. It localises to the host cell outer membrane. Its function is as follows. Induces the formation of specific membrane adhesion sites between the inner and outer membranes, apparently leading to host cell lysis. Lysis may be performed via activation of host murein hydrolases. The sequence is that of Lysis protein from Escherichia phage MS2 (Bacteriophage MS2).